We begin with the raw amino-acid sequence, 439 residues long: MGVANDSSPEYQWMSPHRLSDTVILGDCLYFNNIMSQLDLHQNWAPSVRLLNYFKNFNKETLLKIEENDYINSSFFQQKDKRFYPINDDFYHISTGGYGIVFKIDNYVVKFVFEATKLYSPMETTAEFTVPKFLYNNLKGDEKKLIVCAWAMGLNYKLTFLHTLYKRVLHMLLLLIQTMDGQELSLRYSSKVFLKAFNERKDSIKFVKLLSHFYPAVINSNINVINYFNRMFHFFEHEKRTNYEYERGNIIIFPLALYSADKVDTELAIKLGFKSLVQYIKFIFLQMSLLYIKIYELPCCDNFLHADLKPDNILLFDSNEPIIIHLKNKKFVFNERIKSALNDFDFSQVAGIINKKIKNNFKVEHNWYYDFHFFVHTLLKTYPEIEKDIEFSTALEEFIMCTKTDCDKYRLKVSILHPISFLEKFIMRDIFSDWINGRN.

The region spanning 87 to 439 is the Protein kinase domain; it reads NDDFYHISTG…IFSDWINGRN (353 aa). ATP is bound by residues 93–101 and Lys-117; that span reads ISTGGYGIV. Asp-307 serves as the catalytic Proton acceptor.

Belongs to the protein kinase superfamily. Ser/Thr protein kinase family. Phosphorylated in vivo. Autophosphorylated in vitro.

Its subcellular location is the host endoplasmic reticulum. The protein localises to the host endoplasmic reticulum-Golgi intermediate compartment. It catalyses the reaction L-seryl-[protein] + ATP = O-phospho-L-seryl-[protein] + ADP + H(+). It carries out the reaction L-threonyl-[protein] + ATP = O-phospho-L-threonyl-[protein] + ADP + H(+). Functionally, essential serine-protein kinase involved in the early stage of virion morphogenesis. In Monkeypox virus, this protein is Serine/threonine-protein kinase 2 (OPG054).